Reading from the N-terminus, the 192-residue chain is Adapter protein MecA (192 aa).

Belongs to the MecA family. In terms of assembly, homodimer.

Functionally, enables the recognition and targeting of unfolded and aggregated proteins to the ClpC protease or to other proteins involved in proteolysis. Acts negatively in the development of competence by binding ComK and recruiting it to the ClpCP protease. When overexpressed, inhibits sporulation. Also involved in Spx degradation by ClpC. In Oceanobacillus iheyensis (strain DSM 14371 / CIP 107618 / JCM 11309 / KCTC 3954 / HTE831), this protein is Adapter protein MecA.